A 301-amino-acid polypeptide reads, in one-letter code: GTPase Era (301 aa).

One can recognise an Era-type G domain in the interval 4 to 173; the sequence is KAGFVALIGK…LECISKHLIP (170 aa). Residues 12 to 19 form a G1 region; that stretch reads GKPNAGKS. Residue 12–19 coordinates GTP; the sequence is GKPNAGKS. Residues 38–42 form a G2 region; the sequence is NATRK. The G3 stretch occupies residues 64 to 67; that stretch reads DTPG. GTP contacts are provided by residues 64 to 68 and 122 to 125; these read DTPGL and SKID. The interval 122–125 is G4; it reads SKID. The segment at 152 to 154 is G5; that stretch reads LSA. A KH type-2 domain is found at 204–280; sequence LSDEIPYESD…FLNLQVIAQK (77 aa).

This sequence belongs to the TRAFAC class TrmE-Era-EngA-EngB-Septin-like GTPase superfamily. Era GTPase family. Monomer.

It is found in the cytoplasm. The protein resides in the cell inner membrane. An essential GTPase that binds both GDP and GTP, with rapid nucleotide exchange. Plays a role in 16S rRNA processing and 30S ribosomal subunit biogenesis and possibly also in cell cycle regulation and energy metabolism. The protein is GTPase Era of Helicobacter pylori (strain HPAG1).